A 596-amino-acid polypeptide reads, in one-letter code: MTMTLHTKASGMALLHQIQANELEPLNRPQLKIPLERPLGEVYMDSSKPAVYNYPEGAAYDFNAAAPASAPVYGQSGLPYGPGSEAAAFGANGLGAFPPLNSVSPSPLVLLHPPPQPLSPFLHPHGQQVPYYLENESSGYAVREAGPPAYYRPNSDNRRQGGRERLASTSDKGSMAMESAKETRYCAVCNDYASGYHYGVWSCEGCKAFFKRSIQGHNDYMCPATNQCTIDKNRRKSCQACRLRKCYEVGMMKGGIRKDRRGGRMLKHKRQRDDGEGRNEAVPSGDMRAANLWPSPIMIKHTKKNSPVLSLTADQMISALLEAEPPIIYSEYDPTRPFSEASMMGLLTNLADRELVHMINWAKRVPGFVDLALHDQVHLLECAWLEILMIGLVWRSMEHPGKLLFAPNLLLDRNQGKCVEGMVEIFDMLLATSSRFRMMNLQGEEFVCLKSIILLNSGVYTFLSSTLRSLEEKDHIHRVLDKITDTLIHLMAKAGLTLQQQHRRLAQLLLILSHFRHMSNKGMEHLYSMKCKNVVPLYDLLLEMLDAHRLHAPANFGSAPPEDVNQSQLAPTGCTSSHSLQTYYITGEAENFPSTV.

Residues 1–185 (MTMTLHTKAS…AMESAKETRY (185 aa)) are modulating (transactivation AF-1); mediates interaction with MACROD1. An O-linked (GlcNAc) serine glycan is attached at S10. Residues 36 to 48 (ERPLGEVYMDSSK) form a required for interaction with NCOA1 region. Residues 36 to 175 (ERPLGEVYMD…LASTSDKGSM (140 aa)) are interaction with DDX5; self-association. 2 positions are modified to phosphoserine; by CDK2: S104 and S106. S119 bears the Phosphoserine mark. The segment at 144-175 (EAGPPAYYRPNSDNRRQGGRERLASTSDKGSM) is disordered. Over residues 155 to 166 (SDNRRQGGRERL) the composition is skewed to basic and acidic residues. The residue at position 168 (S168) is a Phosphoserine; by CK2. 2 NR C4-type zinc fingers span residues 186 to 206 (CAVCNDYASGYHYGVWSCEGC) and 222 to 246 (CPATNQCTIDKNRRKSCQACRLRKC). The segment at residues 186-251 (CAVCNDYASG…RLRKCYEVGM (66 aa)) is a DNA-binding region (nuclear receptor). Positions 186-311 (CAVCNDYASG…TKKNSPVLSL (126 aa)) are mediates interaction with DNTTIP2. The tract at residues 252–311 (MKGGIRKDRRGGRMLKHKRQRDDGEGRNEAVPSGDMRAANLWPSPIMIKHTKKNSPVLSL) is hinge. Residues 259–270 (DRRGGRMLKHKR) are compositionally biased toward basic residues. Residues 259–285 (DRRGGRMLKHKRQRDDGEGRNEAVPSG) are disordered. An Asymmetric dimethylarginine; by PRMT1 modification is found at R261. The interaction with AKAP13 stretch occupies residues 263-596 (GRMLKHKRQR…GEAENFPSTV (334 aa)). The segment at 265–595 (MLKHKRQRDD…TGEAENFPST (331 aa)) is self-association. The NR LBD domain occupies 312-548 (TADQMISALL…DLLLEMLDAH (237 aa)). Residues 312–595 (TADQMISALL…TGEAENFPST (284 aa)) are transactivation AF-2. Residues E354 and R395 each contribute to the 17beta-estradiol site. Residue C448 is the site of S-palmitoyl cysteine attachment. Residue H525 participates in 17beta-estradiol binding. Y538 is subject to Phosphotyrosine; by Tyr-kinases. An O-linked (GlcNAc) threonine glycan is attached at T572.

The protein belongs to the nuclear hormone receptor family. NR3 subfamily. As to quaternary structure, binds DNA as a homodimer. Can form a heterodimer with ESR2. Interacts with coactivator NCOA5. Interacts with PELP1, the interaction is enhanced by 17-beta-estradiol; the interaction increases ESR1 transcriptional activity. Interacts with NCOA7; the interaction is ligand-inducible. Interacts with AKAP13, CUEDC2, HEXIM1, KDM5A, MAP1S, SMARD1, and UBE1C. Interacts with MUC1; the interaction is stimulated by 7 beta-estradiol (E2) and enhances ESR1-mediated transcription. Interacts with DNTTIP2, and UIMC1. Interacts with KMT2D/MLL2. Interacts with ATAD2; the interaction is enhanced by estradiol. Interacts with KIF18A and LDB1. Interacts with RLIM (via its C-terminus). Interacts with MACROD1. Interacts with SH2D4A and PLCG. Interacts with SH2D4A; the interaction blocks binding to PLCG and inhibits estrogen-induced cell proliferation. Interacts with DYNLL1. Interacts with CCDC62; the interaction requires estradiol and appears to enhance the transcription of target genes. Interacts with NR2C1; the interaction prevents homodimerization of ESR1 and suppresses its transcriptional activity and cell growth. Interacts with DNAAF4. Interacts with PRMT2. Interacts with RBFOX2. Interacts with EP300; the interaction is estrogen-dependent and enhanced by CITED1. Interacts with CITED1; the interaction is estrogen-dependent. Interacts with FAM120B, FOXL2, PHB2 and SLC30A9. Interacts with coactivators NCOA3 and NCOA6. Interacts with STK3/MST2 only in the presence of SAV1 and vice-versa. Binds to CSNK1D. Interacts with NCOA2; NCOA2 can interact with ESR1 AF-1 and AF-2 domains simultaneously and mediate their transcriptional synergy. Interacts with DDX5. Interacts with NCOA1; the interaction seems to require a self-association of N-terminal and C-terminal regions. Interacts with ZNF366, DDX17, NFKB1, RELA, SP1 and SP3. Interacts with NRIP1. Interacts with GPER1; the interaction occurs in an estrogen-dependent manner. Interacts with CLOCK and the interaction is stimulated by estrogen. Interacts with TRIP4 (ufmylated); estrogen dependent. Interacts with LMTK3; the interaction phosphorylates ESR1 (in vitro) and protects it against proteasomal degradation. Interacts with CCAR2 (via N-terminus) in a ligand-independent manner. Interacts with ZFHX3. Interacts with SFR1 in a ligand-dependent and -independent manner. Interacts with DCAF13, LATS1 and DCAF1; regulates ESR1 ubiquitination and ubiquitin-mediated proteasomal degradation. Interacts (via DNA-binding domain) with POU4F2 (C-terminus); this interaction increases the estrogen receptor ESR1 transcriptional activity in a DNA- and ligand 17-beta-estradiol-independent manner. Interacts with ESRRB isoform 1. Interacts with UBE3A and WBP2. Interacts with GTF2B. Interacts with RBM39. In the absence of hormonal ligand, interacts with TACC1. Interacts with PI3KR1 or PI3KR2 and PTK2/FAK1. Interacts with SRC. Interacts with BAG1; the interaction is promoted in the absence of estradiol (17-beta-estradiol/E2). Interacts with and ubiquitinated by STUB1; the interaction is promoted in the absence of estradiol (17-beta-estradiol/E2). Interacts with NEDD8. In terms of processing, glycosylated; contains N-acetylglucosamine, probably O-linked. Ubiquitinated; regulated by LATS1 via DCAF1 it leads to ESR1 proteasomal degradation. Deubiquitinated by OTUB1. Ubiquitinated by STUB1/CHIP; in the CA1 hippocampal region following loss of endogenous circulating estradiol (17-beta-estradiol/E2). Ubiquitinated by UBR5, leading to its degradation: UBR5 specifically recognizes and binds ligand-bound ESR1 when it is not associated with coactivators (NCOAs). In presence of NCOAs, the UBR5-degron is not accessible, preventing its ubiquitination and degradation. Post-translationally, phosphorylated by cyclin A/CDK2 and CK1. Phosphorylation probably enhances transcriptional activity. Dephosphorylation at Ser-119 by PPP5C inhibits its transactivation activity. Phosphorylated by LMTK3 (in vitro). In terms of processing, palmitoylated at Cys-448 by ZDHHC7 and ZDHHC21. Palmitoylation is required for plasma membrane targeting and for rapid intracellular signaling via ERK and AKT kinases and cAMP generation, but not for signaling mediated by the nuclear hormone receptor. Dimethylated by PRMT1 at Arg-261. The methylation may favor cytoplasmic localization. Demethylated by JMJD6 at Arg-261.

It is found in the nucleus. Its subcellular location is the cytoplasm. The protein resides in the golgi apparatus. The protein localises to the cell membrane. Its function is as follows. Nuclear hormone receptor. The steroid hormones and their receptors are involved in the regulation of eukaryotic gene expression and affect cellular proliferation and differentiation in target tissues. Ligand-dependent nuclear transactivation involves either direct homodimer binding to a palindromic estrogen response element (ERE) sequence or association with other DNA-binding transcription factors, such as AP-1/c-Jun, c-Fos, ATF-2, Sp1 and Sp3, to mediate ERE-independent signaling. Ligand binding induces a conformational change allowing subsequent or combinatorial association with multiprotein coactivator complexes through LXXLL motifs of their respective components. Mutual transrepression occurs between the estrogen receptor (ER) and NF-kappa-B in a cell-type specific manner. Decreases NF-kappa-B DNA-binding activity and inhibits NF-kappa-B-mediated transcription from the IL6 promoter and displace RELA/p65 and associated coregulators from the promoter. Recruited to the NF-kappa-B response element of the CCL2 and IL8 promoters and can displace CREBBP. Present with NF-kappa-B components RELA/p65 and NFKB1/p50 on ERE sequences. Can also act synergistically with NF-kappa-B to activate transcription involving respective recruitment adjacent response elements; the function involves CREBBP. Can activate the transcriptional activity of TFF1. Also mediates membrane-initiated estrogen signaling involving various kinase cascades. Essential for MTA1-mediated transcriptional regulation of BRCA1 and BCAS3. Maintains neuronal survival in response to ischemic reperfusion injury when in the presence of circulating estradiol (17-beta-estradiol/E2). The polypeptide is Estrogen receptor (ESR1) (Bos taurus (Bovine)).